Here is a 221-residue protein sequence, read N- to C-terminus: Very-long-chain (3R)-3-hydroxyacyl-CoA dehydratase PASTICCINO 2 (221 aa).

The Cytoplasmic segment spans residues 1 to 11 (MAGFLSVVRRV). Residues 12–32 (YLTLYNWIVFAGWAQVLYLAI) traverse the membrane as a helical segment. Topologically, residues 33–51 (TTLKETGYENVYDAIEKPL) are lumenal. A helical transmembrane segment spans residues 52-70 (QLAQTAAVLEILHGLVGLV). Residues 71 to 76 (RSPVSA) are Cytoplasmic-facing. Residues 77–95 (TLPQIGSRLFLTWGILYSF) form a helical membrane-spanning segment. Residues 96-100 (PEVRS) lie on the Lumenal side of the membrane. Residues 101–122 (HFLVTSLVISWSITEIIRYSFF) form a helical membrane-spanning segment. The Cytoplasmic segment spans residues 123–142 (GFKEALGFAPSWHLWLRYSS). Residues 143–165 (FLLLYPTGITSEVGLIYLALPHI) form a helical membrane-spanning segment. Catalysis depends on residues Tyr147 and Glu154. Residues 166 to 184 (KTSEMYSVRMPNILNFSFD) are Lumenal-facing. The helical transmembrane segment at 185–204 (FFYATILVLAIYVPGSPHMY) threads the bilayer. Topologically, residues 205–221 (RYMLGQRKRALSKSKRE) are cytoplasmic.

The protein belongs to the very long-chain fatty acids dehydratase HACD family. Interacts with CDKA-1; but only with the 'Tyr-15' phosphorylated protein. Interacts with PAS1. Part of the fatty acid elongase complex which contains a beta-ketoacyl-CoA synthase (KCS), a beta-ketoacyl-CoA reductase (KCR), a beta-hydroxyacyl-CoA dehydratase (HCD) and an enoyl-CoA reductase (ECR). As to expression, high expression in young seedlings, roots, root tips, flowers and young siliques. Lower levels in leaves and stems.

The protein localises to the endoplasmic reticulum membrane. It localises to the cytoplasm. The protein resides in the nucleus. The catalysed reaction is a very-long-chain (3R)-3-hydroxyacyl-CoA = a very-long-chain (2E)-enoyl-CoA + H2O. It functions in the pathway lipid metabolism; fatty acid biosynthesis. In terms of biological role, catalyzes the third of the four reactions of the long-chain fatty acids elongation cycle. This endoplasmic reticulum-bound enzymatic process, allows the addition of two carbons to the chain of long- and very long-chain fatty acids/VLCFAs per cycle. This enzyme catalyzes the dehydration of the 3-hydroxyacyl-CoA intermediate into trans-2,3-enoyl-CoA, within each cycle of fatty acid elongation. Thereby, it participates in the production of VLCFAs of different chain lengths that are involved in multiple biological processes as precursors of membrane lipids and lipid mediators. May be an anti-phosphatase that prevents CDKA-1 dephosphorylation and activation. Involved in the hormonal control of cell division and differentiation. Required for proliferation control of meristematic and non-meristematic cells. Negative regulator of the cell cycle. The protein is Very-long-chain (3R)-3-hydroxyacyl-CoA dehydratase PASTICCINO 2 (PAS2) of Arabidopsis thaliana (Mouse-ear cress).